A 245-amino-acid chain; its full sequence is Cypemycin N-terminal methyltransferase (245 aa).

Belongs to the methyltransferase superfamily.

It carries out the reaction N-terminal L-alanyl-[cypemycin] + 2 S-adenosyl-L-methionine = N-terminal N,N-dimethyl-L-alanyl-[cypemycin] + 2 S-adenosyl-L-homocysteine + 3 H(+). Its function is as follows. Involved in the biosynthesis of the lanaridin cypemycin. The enzyme can methylate a variety of oligopeptides, cyclic peptides and the epsilon-amino group of lysine. In Streptomyces sp, this protein is Cypemycin N-terminal methyltransferase.